The chain runs to 212 residues: MNSRLIVTGTDTGIGKTVFSAALCHALGAVYWKPVQSGLEEETDSEIVARLAQASPQRILPEAWRLNTPASPHLSARLDGVEIRPEEMHIPATSLPLVIEGAGGLLVPLNDKTLFADLFAIWRIPAILCARAALGTINHTLLSLEAMRSRDIPVLGVAFISEANEDTETTIAHLGRVKRLGRLPLLDDLSPEKLHHSFARNFHIDDFAGVAR.

13-18 (GIGKTV) lines the ATP pocket. T17 contributes to the Mg(2+) binding site. K33 is a catalytic residue. S37 contributes to the substrate binding site. E100 is a Mg(2+) binding site. ATP is bound by residues 100-103 (EGAG), 160-161 (IS), and 184-186 (PLL).

It belongs to the dethiobiotin synthetase family. As to quaternary structure, homodimer. Mg(2+) is required as a cofactor.

It localises to the cytoplasm. It catalyses the reaction (7R,8S)-7,8-diammoniononanoate + CO2 + ATP = (4R,5S)-dethiobiotin + ADP + phosphate + 3 H(+). It participates in cofactor biosynthesis; biotin biosynthesis; biotin from 7,8-diaminononanoate: step 1/2. In terms of biological role, catalyzes a mechanistically unusual reaction, the ATP-dependent insertion of CO2 between the N7 and N8 nitrogen atoms of 7,8-diaminopelargonic acid (DAPA, also called 7,8-diammoniononanoate) to form a ureido ring. The polypeptide is ATP-dependent dethiobiotin synthetase BioD (Brucella abortus (strain S19)).